We begin with the raw amino-acid sequence, 503 residues long: MAAQALALLREVSRLEAPLEELRALQSLLQSVPLSELREQAAELRLGPLFSLLNENHREQTTLCVSILERLLQALEPVHVARNLRVDLQRGLTHPNDSVKILTLSQVGRIVENSDAVTEILNNAELLKQIVYCIGGENLSVAKTAIKSLSRISLTQAGLEALFESNLLDDLKSVMKTNDIVRYRVYELIVEISSVSPESLNCCTTSGLVTQLLRELTGEDVLVRATCIEMVTSLACTHHGRQYLAQEGVIDQISNIIVGADADPFSSFYLPGFVKFFGNLAIMDSPQQICERYPIFMEKVFEMTESQDPTMIGVAVDTIGILGSNVEGKQVLQKTGTRFERLLMKIGYQAKNASTELKIRCLDALSSLFYLPPEQTDDLLRMTESWFSSLSRDPLELFRGISNQPFPELHCAALKVFTAIANQPWAQKLMFNSPGFVEYVMDRSVEHDKASKDAKYELVKALANSKTIAEIFGNPNYLRLRTYLSEGPYYVKPISTTAVEGAE.

Ala-2 is subject to N-acetylalanine.

Belongs to the proteasome subunit S5B/HSM3 family. As to quaternary structure, interacts with PSMC1, PSMC2, PSMD1 and PSMD6. Part of transient complex containing PSMD5, PSMC2, PSMC1 and PSMD2 formed during the assembly of the 26S proteasome.

Its function is as follows. Acts as a chaperone during the assembly of the 26S proteasome, specifically of the base subcomplex of the PA700/19S regulatory complex (RC). In the initial step of the base subcomplex assembly is part of an intermediate PSMD5:PSMC2:PSMC1:PSMD2 module which probably assembles with a PSMD10:PSMC4:PSMC5:PAAF1 module followed by dissociation of PSMD5. The polypeptide is 26S proteasome non-ATPase regulatory subunit 5 (PSMD5) (Bos taurus (Bovine)).